We begin with the raw amino-acid sequence, 418 residues long: UDP-N-acetylglucosamine 1-carboxyvinyltransferase (418 aa).

Residue 22–23 coordinates phosphoenolpyruvate; it reads KN. Arginine 91 provides a ligand contact to UDP-N-acetyl-alpha-D-glucosamine. Cysteine 115 serves as the catalytic Proton donor. Cysteine 115 is subject to 2-(S-cysteinyl)pyruvic acid O-phosphothioketal. Residues aspartate 305 and isoleucine 327 each contribute to the UDP-N-acetyl-alpha-D-glucosamine site.

This sequence belongs to the EPSP synthase family. MurA subfamily.

Its subcellular location is the cytoplasm. The catalysed reaction is phosphoenolpyruvate + UDP-N-acetyl-alpha-D-glucosamine = UDP-N-acetyl-3-O-(1-carboxyvinyl)-alpha-D-glucosamine + phosphate. The protein operates within cell wall biogenesis; peptidoglycan biosynthesis. In terms of biological role, cell wall formation. Adds enolpyruvyl to UDP-N-acetylglucosamine. This is UDP-N-acetylglucosamine 1-carboxyvinyltransferase from Aeromonas hydrophila subsp. hydrophila (strain ATCC 7966 / DSM 30187 / BCRC 13018 / CCUG 14551 / JCM 1027 / KCTC 2358 / NCIMB 9240 / NCTC 8049).